The sequence spans 61 residues: Small ribosomal subunit protein uS14 (61 aa).

Zn(2+) contacts are provided by Cys-24, Cys-27, Cys-40, and Cys-43.

It belongs to the universal ribosomal protein uS14 family. Zinc-binding uS14 subfamily. In terms of assembly, part of the 30S ribosomal subunit. Contacts proteins S3 and S10. Requires Zn(2+) as cofactor.

Binds 16S rRNA, required for the assembly of 30S particles and may also be responsible for determining the conformation of the 16S rRNA at the A site. The chain is Small ribosomal subunit protein uS14 from Mycoplasma pneumoniae (strain ATCC 29342 / M129 / Subtype 1) (Mycoplasmoides pneumoniae).